The sequence spans 1806 residues: Atrochrysone carboxylic acid synthase (1806 aa).

The segment at 30–283 is N-terminal acylcarrier protein transacylase domain (SAT); that stretch reads DLQGLFRRLY…SLPVYSGLCH (254 aa). In terms of domain architecture, Ketosynthase family 3 (KS3) spans 416-850; it reads QSKIAIIGMS…GGNTTVCLEE (435 aa). Catalysis depends on for beta-ketoacyl synthase activity residues cysteine 589, histidine 725, and histidine 768. The malonyl-CoA:ACP transacylase (MAT) domain stretch occupies residues 951 to 1270; it reads FAFTGQGASY…SLTALHCAGV (320 aa). The interval 1340-1659 is product template (PT) domain; sequence TSTVQQIIEE…RILLNRFFTA (320 aa). Residues 1344-1479 form an N-terminal hotdog fold region; sequence QQIIEESFNG…ASILYDDAAL (136 aa). Residues 1344 to 1654 form the PKS/mFAS DH domain; the sequence is QQIIEESFNG…FRRYPRILLN (311 aa). Residue histidine 1376 is the Proton acceptor; for dehydratase activity of the active site. The tract at residues 1506-1654 is C-terminal hotdog fold; it reads IANRFTRNMA…FRRYPRILLN (149 aa). Residue aspartate 1565 is the Proton donor; for dehydratase activity of the active site. The tract at residues 1668–1726 is disordered; sequence HAAASSTPAPRTKPEPVPVATPATAAAPVAQSPAAPASVTPAPAPAPAPGPTPAAAPAA. The segment covering 1685–1708 has biased composition (low complexity); sequence PVATPATAAAPVAQSPAAPASVTP. Over residues 1709–1721 the composition is skewed to pro residues; sequence APAPAPAPGPTPA. Residues 1728 to 1805 form the Carrier domain; that stretch reads GESDSVAAKA…DLRSWLLEYY (78 aa). Serine 1765 is modified (O-(pantetheine 4'-phosphoryl)serine).

It carries out the reaction holo-[ACP] + 8 malonyl-CoA + 8 H(+) = atrochrysone carboxyl-[ACP] + 8 CO2 + 8 CoA + 2 H2O. The protein operates within secondary metabolite biosynthesis. Its function is as follows. Atrochrysone carboxylic acid synthase; part of the gene cluster that mediates the biosynthesis of monodictyphenone, a prenyl xanthone derivative. The pathway begins with the synthesis of atrochrysone thioester by the polyketide synthase (PKS) mdpG. The atrochrysone carboxyl ACP thioesterase mdpF then breaks the thioester bond and releases the atrochrysone carboxylic acid from mdpG. The atrochrysone carboxylic acid is then converted to atrochrysone which is further transformed into emodin anthrone. The next step is performed by the anthrone oxygenase mdpH that catalyzes the oxidation of emodinanthrone to emodin. Emodin is further modified to yield monodictyphenone via several steps involving mdpB, mdpC mdpJ, mdpK and mdpL. The short chain dehydrogenase mdpC converts the tautomers of emodin hydroquinone into the 3-hydroxy-3,4-dihydroan-thracen-1(2H)-one derivative. These enzymes with xptA, xptB and xptC are also proposed to be involved in the synthesis of shamixanthone from emodin. Especially, direct reduction of emodin by the short chain dehydrogenase mdpC followed by dehydration catalyzed by the scytalone dehydratase-like protein mdpB gives loss of oxygen and formation of chrysophanol intermediate in two simple steps. This is Atrochrysone carboxylic acid synthase from Emericella nidulans (strain FGSC A4 / ATCC 38163 / CBS 112.46 / NRRL 194 / M139) (Aspergillus nidulans).